We begin with the raw amino-acid sequence, 267 residues long: DNA repair protein RecO (267 aa).

Belongs to the RecO family.

Its function is as follows. Involved in DNA repair and RecF pathway recombination. This chain is DNA repair protein RecO, found in Prochlorococcus marinus (strain MIT 9303).